Consider the following 432-residue polypeptide: Trigger factor (432 aa).

Positions 161–246 (EDRVTIDFTG…LKKVEERELP (86 aa)) constitute a PPIase FKBP-type domain.

It belongs to the FKBP-type PPIase family. Tig subfamily.

The protein localises to the cytoplasm. The catalysed reaction is [protein]-peptidylproline (omega=180) = [protein]-peptidylproline (omega=0). Its function is as follows. Involved in protein export. Acts as a chaperone by maintaining the newly synthesized protein in an open conformation. Functions as a peptidyl-prolyl cis-trans isomerase. The chain is Trigger factor from Salmonella schwarzengrund (strain CVM19633).